Reading from the N-terminus, the 236-residue chain is NEP1-interacting protein 1 (236 aa).

Topologically, residues 1–44 are lumenal, thylakoid; sequence MASSRFQSGFCPISSCPSLENFIERIKDACRFTLSAVLGTILSA. A helical membrane pass occupies residues 45–65; sequence VLTFFFALVGTLLGALTGALI. Over 66–78 the chain is Stromal; the sequence is GQETESGFIRGAA. Residues 79-99 form a helical membrane-spanning segment; sequence VGAISGAVFSIEVFESSLVLW. The Lumenal, thylakoid segment spans residues 100–104; the sequence is KSNES. The chain crosses the membrane as a helical span at residues 105–125; that stretch reads RFGCLLYLIDVIVSLISGRLV. At 126–236 the chain is on the stromal side; that stretch reads RERIGPAMLS…GSCPMCRRDL (111 aa). An RING-type; atypical zinc finger spans residues 191–233; the sequence is CSVCLQDFQLGETVRSLPHCHHMFHLPCIDNWLFRHGSCPMCR.

It belongs to the RING-type zinc finger family. NIP subfamily. In terms of assembly, interacts with RPOT2.

The protein localises to the plastid. Its subcellular location is the chloroplast thylakoid membrane. Functionally, intrinsic thylakoid membrane protein that fixes RPOT2 on the stromal side of the thylakoid membrane. The chain is NEP1-interacting protein 1 (NIP1) from Arabidopsis thaliana (Mouse-ear cress).